The primary structure comprises 224 residues: MASKLTDRQQEILDLIRLTVSRTGFPPTRAEIARALGFRSPNAAEDHLKALARKGAIELTAGASRGIRLKDAGETIPPGPETAASALAGMADAVGRLLLPLVGRVAAGSPILAAEHVEREVGVDVDLFAQTPDYLLKVRGMSMRDAGILEGDLLAVKRAAEARNGQIVVARLGDEVTVKRLQRHQGRIELLPENPDFSPIVVDGTQEFALEGIAVGLIRTQALH.

The segment at residues 29–49 is a DNA-binding region (H-T-H motif); that stretch reads RAEIARALGFRSPNAAEDHLK. Active-site for autocatalytic cleavage activity residues include S142 and K179.

Belongs to the peptidase S24 family. Homodimer.

The enzyme catalyses Hydrolysis of Ala-|-Gly bond in repressor LexA.. Its function is as follows. Represses a number of genes involved in the response to DNA damage (SOS response), including recA and lexA. In the presence of single-stranded DNA, RecA interacts with LexA causing an autocatalytic cleavage which disrupts the DNA-binding part of LexA, leading to derepression of the SOS regulon and eventually DNA repair. The protein is LexA repressor of Bordetella petrii (strain ATCC BAA-461 / DSM 12804 / CCUG 43448).